We begin with the raw amino-acid sequence, 229 residues long: uncharacterized protein (229 aa).

This is an uncharacterized protein from Methanocaldococcus jannaschii (strain ATCC 43067 / DSM 2661 / JAL-1 / JCM 10045 / NBRC 100440) (Methanococcus jannaschii).